Here is a 455-residue protein sequence, read N- to C-terminus: Growth/differentiation factor 9 (455 aa).

An N-terminal signal peptide occupies residues 1–24 (MALPNKFLLWFYCFAWLCFPVSLG). Positions 25–320 (SQASGGDAQI…GRSSHHRHRR (296 aa)) are excised as a propeptide. N-linked (GlcNAc...) asparagine glycosylation is found at Asn-106, Asn-163, Asn-236, Asn-255, and Asn-269. The tract at residues 305 to 328 (EDAAEDGRSSHHRHRRGQETVSSE) is disordered. Asn-339 is a glycosylation site (N-linked (GlcNAc...) asparagine). 3 cysteine pairs are disulfide-bonded: Cys-354/Cys-420, Cys-383/Cys-452, and Cys-387/Cys-454.

It belongs to the TGF-beta family. Homodimer or heterodimer (Potential). But, in contrast to other members of this family, cannot be disulfide-linked. In terms of processing, phosphorylated; phosphorylation is critical for GDF9 function.

Its subcellular location is the secreted. Functionally, required for ovarian folliculogenesis. The polypeptide is Growth/differentiation factor 9 (GDF9) (Papio anubis (Olive baboon)).